Consider the following 264-residue polypeptide: Elongation factor Ts (264 aa).

An involved in Mg(2+) ion dislocation from EF-Tu region spans residues 76–79; it reads TDFV.

The protein belongs to the EF-Ts family.

The protein resides in the cytoplasm. In terms of biological role, associates with the EF-Tu.GDP complex and induces the exchange of GDP to GTP. It remains bound to the aminoacyl-tRNA.EF-Tu.GTP complex up to the GTP hydrolysis stage on the ribosome. This Deinococcus radiodurans (strain ATCC 13939 / DSM 20539 / JCM 16871 / CCUG 27074 / LMG 4051 / NBRC 15346 / NCIMB 9279 / VKM B-1422 / R1) protein is Elongation factor Ts.